A 116-amino-acid chain; its full sequence is Non-specific lipid-transfer protein (116 aa).

A signal peptide spans 1 to 25; it reads MAKMAMMVLCAGVTCMVVGAPYTEA. Cystine bridges form between Cys28-Cys75, Cys38-Cys52, Cys53-Cys98, and Cys73-Cys112.

Belongs to the plant LTP family.

Plant non-specific lipid-transfer proteins transfer phospholipids as well as galactolipids across membranes. May play a role in wax or cutin deposition in the cell walls of expanding epidermal cells and certain secretory tissues. The sequence is that of Non-specific lipid-transfer protein from Helianthus annuus (Common sunflower).